Reading from the N-terminus, the 185-residue chain is MLNEIQQNSQNKMNKSINSLKNAFSKIRASRAHPSLLEQIHINYYGSMVPLSQVANISTEDSRTLKASPWEKDMVSVIEKAIMTSDLGLNPQTIGQVIRIHLPPLTQERRGELVKIIKDEAEKAKIAIRNIRRDANSDFKELLKEKEISKDEARKAEYDIQKITDEYIKKIEINLNKKEDSLLEI.

The protein belongs to the RRF family.

It localises to the cytoplasm. Its function is as follows. Responsible for the release of ribosomes from messenger RNA at the termination of protein biosynthesis. May increase the efficiency of translation by recycling ribosomes from one round of translation to another. The polypeptide is Ribosome-recycling factor (Vesicomyosocius okutanii subsp. Calyptogena okutanii (strain HA)).